Reading from the N-terminus, the 194-residue chain is MLESPWHPLLSQPATEAAIALLGCWLVRRFADGRVIRGRIVETEAYEAGDPACHGYRRQTARNRSMFGPPGQVYVYQIYGRYHCINLATEAADLASAVLIRALEFPDTEAIAGAGPGRLCRFLAIDRQLDGSWLGPTSPLDLEAADYPLGTLIQTTRIGLTRGVDLPWRWYLAESPAVSRRDRRAEAEQMGVSV.

This sequence belongs to the DNA glycosylase MPG family.

This is Putative 3-methyladenine DNA glycosylase from Synechococcus elongatus (strain ATCC 33912 / PCC 7942 / FACHB-805) (Anacystis nidulans R2).